Here is a 545-residue protein sequence, read N- to C-terminus: Chaperonin GroEL (545 aa).

ATP is bound by residues 29 to 32, 86 to 90, G413, 478 to 480, and D494; these read TIGP, DGTTT, and NAA.

The protein belongs to the chaperonin (HSP60) family. As to quaternary structure, forms a cylinder of 14 subunits composed of two heptameric rings stacked back-to-back. Interacts with the co-chaperonin GroES.

The protein localises to the cytoplasm. It catalyses the reaction ATP + H2O + a folded polypeptide = ADP + phosphate + an unfolded polypeptide.. In terms of biological role, together with its co-chaperonin GroES, plays an essential role in assisting protein folding. The GroEL-GroES system forms a nano-cage that allows encapsulation of the non-native substrate proteins and provides a physical environment optimized to promote and accelerate protein folding. The polypeptide is Chaperonin GroEL (Exiguobacterium sibiricum (strain DSM 17290 / CCUG 55495 / CIP 109462 / JCM 13490 / 255-15)).